The following is a 714-amino-acid chain: VIN3-like protein 2 (714 aa).

The segment at 164–232 (RCSCCICRKY…CFYCVSCGKA (69 aa)) adopts a PHD-type zinc-finger fold. A Nuclear localization signal motif is present at residues 239-246 (WKKQLTIA). Positions 366–463 (GSTKIRFEDV…INVLTRSAEE (98 aa)) constitute a Fibronectin type-III domain. Over residues 478–498 (LTNCSTLSSNPSSVEAESNND) the composition is skewed to polar residues. A disordered region spans residues 478–530 (LTNCSTLSSNPSSVEAESNNDYIVPKKPSSKNEDNNSPSVDESAAKRMKRTTD). The segment at 602–714 (SMKDNCNNGD…PSGFCMKLWH (113 aa)) is VIN3-Interacting Domain (VID).

Self-interacts. Interacts with VIN3 and VIL1. Component of the plant homeodomain / polycomb repressive complex 2 (PHD-PRC2) large complex during prolonged cold, composed of core PRC2 components (VRN2, EZA1, FIE and MSI1), and three related PHD finger proteins (VIL1, VIL2 and VIN3) that mediates histone H3 trimethylation on 'Lys-27' (H3K27me3).

The protein resides in the nucleus. Maybe involved in both the vernalization and photoperiod pathways by regulating gene expression. Binds preferentially to dimethylated histone H3 'Lys-9' (H3K9me2). Promotes flowering in non-inductive photoperiods (e.g. short days) through the maintenance of the epigenetically repressed state of MAF5 via H3K9me2 and plant homeodomain / polycomb repressive complex 2 (PHD-PRC2)-dependent H3K27me3. This chain is VIN3-like protein 2 (VIL2), found in Arabidopsis thaliana (Mouse-ear cress).